Here is an 85-residue protein sequence, read N- to C-terminus: MSERGFNRTIKGVVVSNKMDKTIVIRAERLVKHPVFHKYTRKHVKYMVHDEKNECKVGDTVIVMESRPLSRLKRWRMLRIVAKAE.

It belongs to the universal ribosomal protein uS17 family. As to quaternary structure, part of the 30S ribosomal subunit.

Its function is as follows. One of the primary rRNA binding proteins, it binds specifically to the 5'-end of 16S ribosomal RNA. This is Small ribosomal subunit protein uS17 from Syntrophus aciditrophicus (strain SB).